A 261-amino-acid polypeptide reads, in one-letter code: Sulfur carrier protein FdhD (261 aa).

Cys-105 acts as the Cysteine persulfide intermediate in catalysis. Mo-bis(molybdopterin guanine dinucleotide) is bound at residue 245–250; it reads FIRGDR.

The protein belongs to the FdhD family.

It is found in the cytoplasm. Required for formate dehydrogenase (FDH) activity. Acts as a sulfur carrier protein that transfers sulfur from IscS to the molybdenum cofactor prior to its insertion into FDH. This is Sulfur carrier protein FdhD from Listeria innocua serovar 6a (strain ATCC BAA-680 / CLIP 11262).